The following is a 144-amino-acid chain: UPF0102 protein BURPS668_3819 (144 aa).

A disordered region spans residues 1-28 (MCHAREASLGTGEPEAAPRDNFPREAGS). Residues 16–28 (AAPRDNFPREAGS) show a composition bias toward basic and acidic residues.

This sequence belongs to the UPF0102 family.

The protein is UPF0102 protein BURPS668_3819 of Burkholderia pseudomallei (strain 668).